The sequence spans 96 residues: Small ribosomal subunit protein bS18c (96 aa).

It belongs to the bacterial ribosomal protein bS18 family. Part of the 30S ribosomal subunit.

The protein localises to the plastid. It localises to the chloroplast. This is Small ribosomal subunit protein bS18c (rps18) from Pinus thunbergii (Japanese black pine).